The following is a 181-amino-acid chain: SRP-independent targeting protein 2 (181 aa).

Residues 1 to 15 (MAGKAGRKQASSNAK) lie on the Cytoplasmic side of the membrane. The chain crosses the membrane as a helical span at residues 16-36 (IIQGLYKQVSLFLGMAIVRLF). Residues 37-45 (ISRKVTIGQ) are Lumenal-facing. Residues 46 to 66 (WIKLVALNVPMFVALYIIVLS) form a helical membrane-spanning segment. The Cytoplasmic portion of the chain corresponds to 67–89 (GKPKYDGNRVVKQGIDLNDNTNL). The helical transmembrane segment at 90 to 110 (ISYFFDLIYLSLFGNIGIIAF) threads the bilayer. Topologically, residues 111–112 (RT) are lumenal. A helical transmembrane segment spans residues 113-133 (FKFWWCLLLCPIYAGYKLYGL). At 134 to 181 (KNMFMPGAQQTQADNRSKNANEGQSKSKRQMKRERRGETDSKIKYKYR) the chain is on the cytoplasmic side. Positions 144 to 157 (TQADNRSKNANEGQ) are enriched in polar residues. The segment at 144 to 181 (TQADNRSKNANEGQSKSKRQMKRERRGETDSKIKYKYR) is disordered. Positions 168–181 (RRGETDSKIKYKYR) are enriched in basic and acidic residues.

It belongs to the TMEM208 family. As to quaternary structure, interacts with SND1, PHO88/SND3 and the translocon complex subunit SEC61. ENV10/SND2 and PHO88/SND3 form a complex with the translocon in the endoplasmic reticulum membrane.

It localises to the endoplasmic reticulum membrane. Its function is as follows. Functions in the SND pathway, a SRP (signal recognition particle) and GET (guided entry of tail-anchored proteins) independent pathway for targeting a broad range of substrate proteins to the endoplasmic reticulum. SND functions in parallel to GET in targeting proteins with downstream hydrophobic motifs. Involved in vacuolar processing and morphology. In Saccharomyces cerevisiae (strain ATCC 204508 / S288c) (Baker's yeast), this protein is SRP-independent targeting protein 2.